Reading from the N-terminus, the 313-residue chain is Alpha-S1-casein (313 aa).

A signal peptide spans 1–15 (MKLLILTCLVAAAFA). Residues 77-96 (ASEEQAMASAQEDSSISSSS) show a composition bias toward low complexity. A disordered region spans residues 77–111 (ASEEQAMASAQEDSSISSSSEESEEAIPNITEQKN). Phosphoserine is present on residues S90, S91, S93, S94, S95, and S96. 15 consecutive repeat copies span residues 135–140 (LLQKAS), 141–146 (LAKQAS), 147–152 (LFQQPS), 153–158 (LVQQAS), 159–164 (LFQQPS), 165–170 (LLQQAS), 171–176 (LFQQPS), 177–182 (MAQQAS), 183–188 (LLQQLL), 189–194 (LAQQPS), 195–200 (LALQVS), 201–206 (PAQQSS), 207–212 (LVQQAF), 213–218 (LAQQAS), and 219–224 (LAQKHH). A 15 X 6 AA tandem repeats region spans residues 135–224 (LLQKASLAKQ…QQASLAQKHH (90 aa)).

The protein belongs to the alpha-casein family. As to expression, mammary gland specific. Secreted in milk.

It localises to the secreted. Functionally, important role in the capacity of milk to transport calcium phosphate. The polypeptide is Alpha-S1-casein (Csn1s1) (Mus musculus (Mouse)).